The primary structure comprises 359 residues: Cytosolic sulfotransferase 15 (359 aa).

3'-phosphoadenylyl sulfate is bound at residue 101 to 106 (KSGTTW). Catalysis depends on H168, which acts as the Proton acceptor. Residues R190, S198, Y256, and 322–324 (RKG) each bind 3'-phosphoadenylyl sulfate.

Belongs to the sulfotransferase 1 family. As to expression, expressed in leaves.

It is found in the cytoplasm. The catalysed reaction is a 12-hydroxyjasmonate + 3'-phosphoadenylyl sulfate = a 12-sulfojasmonate + adenosine 3',5'-bisphosphate + H(+). Sulfotransferase that utilizes 3'-phospho-5'-adenylyl sulfate (PAPS) as sulfonate donor to specifically catalyze the sulfate conjugation of hydroxyjasmonates, with a preference for 12-hydroxyjasmonate over 11-hydroxyjasmonate. No activity with 12-hydroxyjasmonic acid methyl ester, cucurbic acid, 7-iso-cucurbic acid, 6-epi-cucurbic acid, 6-epi-7-iso-cucurbic acid and their methyl esters, prostaglandin E2, arachidonyl alcohol and 11-eicosenol. The sequence is that of Cytosolic sulfotransferase 15 (SOT15) from Arabidopsis thaliana (Mouse-ear cress).